The following is a 4650-amino-acid chain: Nonribosomal peptide synthetase lenA (4650 aa).

The adenylation 1 stretch occupies residues 227 to 628 (GSILDTIRAK…DGSVIHVGRK (402 aa)). The region spanning 773–849 (PPETVLEKAL…KLAQYLRNTE (77 aa)) is the Carrier 1 domain. S810 carries the post-translational modification O-(pantetheine 4'-phosphoryl)serine. Residues 890–1212 (EDCYPCTALQ…CDFQSQLIFQ (323 aa)) are condensation 1. Residues 1288 to 1622 (ELELNAQKEP…RKIRPGYLGR (335 aa)) are adenylation 2. A Carrier 2 domain is found at 1745-1822 (PPVSAAEKKW…EIAALSETRD (78 aa)). Position 1782 is an O-(pantetheine 4'-phosphoryl)serine (S1782). The tract at residues 1850-2110 (ATNLIAATVH…GEKTRPGGGA (261 aa)) is condensation 2. The adenylation 3 stretch occupies residues 2183–2511 (RCVHDLVHDA…RTGDLIKLRG (329 aa)). The Carrier 3 domain occupies 2630–2708 (APQNRLQHDI…EADVGLDHAS (79 aa)). Residue S2667 is modified to O-(pantetheine 4'-phosphoryl)serine. The tract at residues 2722 to 2998 (ESMARALAVI…KDARRRSPAN (277 aa)) is epimerase. Residues 3128–3565 (VQDVYPCTPI…VDDSQRQQIL (438 aa)) form a condensation 3 region. An adenylation 4 region spans residues 3578-3980 (CVHHIIHQRC…FVGRKDNQIK (403 aa)). The Carrier 4 domain maps to 4114-4190 (TPSTPLEAQL…QLAAVLEEGA (77 aa)). S4151 carries the O-(pantetheine 4'-phosphoryl)serine modification. The interval 4249–4648 (HMVLTFSQPV…TTTPEKLVAE (400 aa)) is condensation 4.

This sequence belongs to the NRP synthetase family. The cofactor is pantetheine 4'-phosphate.

It functions in the pathway alkaloid biosynthesis. Functionally, nonribosomal peptide synthetase; part of the gene cluster that mediates the biosynthesis of the ergot alkaloids lentopeptins A and B. Within the pathway, lenA catalyzes the biosynthesis of the Ala-Val-Ala peptide chain, including a cinnamic acid moiety as the starting unit. The release of the peptide from the enzyme is accomplished via a cyclization reaction catalyzed by the terminal condensation-like (Ct) domain of lenA to form the N-acyldiketopiperazine intermediate. The reaction appears to proceed through a nucleophilic attack on the carbonyl carbon by a lone electron pair of the valine amide nitrogen. The phenylalanine ammonia-lyase lenB provides the starter unit for the synthesis of the N-acyldiketopiperazine intermediate by the NRPS lenA, while the cytochrome P450 monooxygenase lenC is involved in the post-NRPS oxidative modification steps to form lentopeptins A and B. The chain is Nonribosomal peptide synthetase lenA from Aspergillus lentulus.